The sequence spans 263 residues: Mediator of RNA polymerase II transcription subunit 4 (263 aa).

A coiled-coil region spans residues 62–106 (QLAAEQAGIEKKMDGLREQVKEQDEEINQLQKQLKEAEHILATSI). The interval 221 to 263 (LHMTMGAGAGSVSLDTRSHKDASQDDVEVMSTDSSSSSSSDSQ) is disordered. Positions 251 to 263 (STDSSSSSSSDSQ) are enriched in low complexity.

Belongs to the Mediator complex subunit 4 family. Component of the Mediator complex.

The protein localises to the nucleus. In terms of biological role, component of the Mediator complex, a coactivator involved in the regulated transcription of nearly all RNA polymerase II-dependent genes. Mediator functions as a bridge to convey information from gene-specific regulatory proteins to the basal RNA polymerase II transcription machinery. Mediator is recruited to promoters by direct interactions with regulatory proteins and serves as a scaffold for the assembly of a functional preinitiation complex with RNA polymerase II and the general transcription factors. The sequence is that of Mediator of RNA polymerase II transcription subunit 4 (MED4) from Aedes aegypti (Yellowfever mosquito).